Consider the following 181-residue polypeptide: Adenylate kinase (181 aa).

10–15 (GAGKGT) contacts ATP. Positions 30 to 59 (STGELFRRNIEEGTKLGVEAKRYLDAGDLV) are NMP. AMP contacts are provided by residues Thr-31, Arg-36, 57 to 59 (DLV), 85 to 88 (GYPR), and Gln-92. Residues 126 to 132 (GRGRADD) form an LID region. An ATP-binding site is contributed by Arg-127. 2 residues coordinate AMP: Arg-129 and Arg-140. Gly-166 lines the ATP pocket.

This sequence belongs to the adenylate kinase family. In terms of assembly, monomer.

It is found in the cytoplasm. It catalyses the reaction AMP + ATP = 2 ADP. It functions in the pathway purine metabolism; AMP biosynthesis via salvage pathway; AMP from ADP: step 1/1. Functionally, catalyzes the reversible transfer of the terminal phosphate group between ATP and AMP. Plays an important role in cellular energy homeostasis and in adenine nucleotide metabolism. This chain is Adenylate kinase, found in Mycobacterium tuberculosis (strain ATCC 25177 / H37Ra).